A 361-amino-acid chain; its full sequence is Carbon monoxide-induced hydrogenase (361 aa).

Ni(2+) contacts are provided by cysteine 64, cysteine 67, cysteine 355, and cysteine 358.

It to E.coli formate hydrogenlyase hydrogenase isozyme 3 and to bovine mitochondrial NADH-ubiquinone oxidoreductase. Ni(2+) is required as a cofactor.

The carbon monoxide dehydrogenase (CODH) oxidizes carbon monoxide coupled, via CooF, to the reduction of a hydrogen cation by a hydrogenase (probably CooH). This Rhodospirillum rubrum protein is Carbon monoxide-induced hydrogenase (cooH).